The chain runs to 352 residues: Phosphoribosylformylglycinamidine cyclo-ligase (352 aa).

It belongs to the AIR synthase family.

It is found in the cytoplasm. It carries out the reaction 2-formamido-N(1)-(5-O-phospho-beta-D-ribosyl)acetamidine + ATP = 5-amino-1-(5-phospho-beta-D-ribosyl)imidazole + ADP + phosphate + H(+). Its pathway is purine metabolism; IMP biosynthesis via de novo pathway; 5-amino-1-(5-phospho-D-ribosyl)imidazole from N(2)-formyl-N(1)-(5-phospho-D-ribosyl)glycinamide: step 2/2. This chain is Phosphoribosylformylglycinamidine cyclo-ligase, found in Stenotrophomonas maltophilia (strain R551-3).